The chain runs to 427 residues: Glutamate-1-semialdehyde 2,1-aminomutase (427 aa).

N6-(pyridoxal phosphate)lysine is present on lysine 265.

The protein belongs to the class-III pyridoxal-phosphate-dependent aminotransferase family. HemL subfamily. In terms of assembly, homodimer. Requires pyridoxal 5'-phosphate as cofactor.

The protein resides in the cytoplasm. The catalysed reaction is (S)-4-amino-5-oxopentanoate = 5-aminolevulinate. It functions in the pathway porphyrin-containing compound metabolism; protoporphyrin-IX biosynthesis; 5-aminolevulinate from L-glutamyl-tRNA(Glu): step 2/2. This chain is Glutamate-1-semialdehyde 2,1-aminomutase, found in Neisseria meningitidis serogroup B (strain ATCC BAA-335 / MC58).